Here is a 230-residue protein sequence, read N- to C-terminus: Broad-specificity phosphatase YOR283W (230 aa).

Residue His-24 is the Tele-phosphohistidine intermediate of the active site. Residues Gln-36–Gly-37 and Glu-102–Met-105 contribute to the substrate site. Glu-102 (proton donor/acceptor) is an active-site residue.

The protein belongs to the phosphoglycerate mutase family. BPG-dependent PGAM subfamily.

Its subcellular location is the cytoplasm. The protein resides in the nucleus. In terms of biological role, metal-independent phosphatase active against a broad range of phosphorylated substrates including nucleoside tri- and diphosphates, phosphorylated organic acids, and amino acids. Shows no activity against phytic acid, phosphorylated carbohydrates, and nucleoside monophosphates. The protein is Broad-specificity phosphatase YOR283W of Saccharomyces cerevisiae (strain ATCC 204508 / S288c) (Baker's yeast).